Reading from the N-terminus, the 296-residue chain is Phosphatidylglycerol--prolipoprotein diacylglyceryl transferase (296 aa).

The next 7 membrane-spanning stretches (helical) occupy residues 17–37 (LAVR…IVVG), 59–79 (MMFY…VLFY), 97–117 (GGMS…LFAW), 129–149 (FVAP…FING), 203–223 (PSQL…LFFF), 230–250 (LGAV…TVEF), and 265–285 (LSMG…LLVW). Arg-142 contributes to the a 1,2-diacyl-sn-glycero-3-phospho-(1'-sn-glycerol) binding site.

The protein belongs to the Lgt family.

The protein localises to the cell inner membrane. The catalysed reaction is L-cysteinyl-[prolipoprotein] + a 1,2-diacyl-sn-glycero-3-phospho-(1'-sn-glycerol) = an S-1,2-diacyl-sn-glyceryl-L-cysteinyl-[prolipoprotein] + sn-glycerol 1-phosphate + H(+). The protein operates within protein modification; lipoprotein biosynthesis (diacylglyceryl transfer). Functionally, catalyzes the transfer of the diacylglyceryl group from phosphatidylglycerol to the sulfhydryl group of the N-terminal cysteine of a prolipoprotein, the first step in the formation of mature lipoproteins. This Burkholderia ambifaria (strain MC40-6) protein is Phosphatidylglycerol--prolipoprotein diacylglyceryl transferase.